The following is a 146-amino-acid chain: Anti-sigma F factor (146 aa).

The protein belongs to the anti-sigma-factor family.

The enzyme catalyses L-seryl-[protein] + ATP = O-phospho-L-seryl-[protein] + ADP + H(+). It carries out the reaction L-threonyl-[protein] + ATP = O-phospho-L-threonyl-[protein] + ADP + H(+). In terms of biological role, binds to sigma F and blocks its ability to form an RNA polymerase holoenzyme (E-sigma F). Phosphorylates SpoIIAA on a serine residue. This phosphorylation may enable SpoIIAA to act as an anti-anti-sigma factor that counteracts SpoIIAB and thus releases sigma F from inhibition. The polypeptide is Anti-sigma F factor (Bacillus licheniformis).